We begin with the raw amino-acid sequence, 60 residues long: Large ribosomal subunit protein bL32 (60 aa).

It belongs to the bacterial ribosomal protein bL32 family.

The chain is Large ribosomal subunit protein bL32 from Borrelia hermsii (strain HS1 / DAH).